The primary structure comprises 467 residues: 3-isopropylmalate dehydratase large subunit (467 aa).

Cys-347, Cys-407, and Cys-410 together coordinate [4Fe-4S] cluster.

The protein belongs to the aconitase/IPM isomerase family. LeuC type 1 subfamily. In terms of assembly, heterodimer of LeuC and LeuD. [4Fe-4S] cluster is required as a cofactor.

It catalyses the reaction (2R,3S)-3-isopropylmalate = (2S)-2-isopropylmalate. The protein operates within amino-acid biosynthesis; L-leucine biosynthesis; L-leucine from 3-methyl-2-oxobutanoate: step 2/4. Catalyzes the isomerization between 2-isopropylmalate and 3-isopropylmalate, via the formation of 2-isopropylmaleate. The sequence is that of 3-isopropylmalate dehydratase large subunit from Synechococcus sp. (strain JA-3-3Ab) (Cyanobacteria bacterium Yellowstone A-Prime).